A 205-amino-acid chain; its full sequence is Small ribosomal subunit protein uS5 (205 aa).

The region spanning Leu49–Val112 is the S5 DRBM domain.

The protein belongs to the universal ribosomal protein uS5 family. Part of the 30S ribosomal subunit. Contacts protein S4.

In terms of biological role, with S4 and S12 plays an important role in translational accuracy. The sequence is that of Small ribosomal subunit protein uS5 from Methanoregula boonei (strain DSM 21154 / JCM 14090 / 6A8).